Here is a 189-residue protein sequence, read N- to C-terminus: MAIKSDRWIREMSEKHGMIEPYAENQVRFNAQGEKLISYGVSSYGYDVRCAPEFKVFTNVHSAIVDPKNFDEKSFIDIHSDVCIIPPNSFALARTVEYFRIPRNVLTVCLGKSTYARCGIIVNVTPLEPEWEGHVTLEFSNTTNLPARIYAGEGVAQMLFFESDEVCETSYKDRGGKYQGQTGVTLPKA.

DCTP contacts are provided by residues 112 to 117 (KSTYAR), 136 to 138 (TLE), glutamine 157, tyrosine 171, and glutamine 181. Catalysis depends on glutamate 138, which acts as the Proton donor/acceptor.

Belongs to the dCTP deaminase family. Homotrimer.

It carries out the reaction dCTP + H2O + H(+) = dUTP + NH4(+). The protein operates within pyrimidine metabolism; dUMP biosynthesis; dUMP from dCTP (dUTP route): step 1/2. Catalyzes the deamination of dCTP to dUTP. This is dCTP deaminase from Acinetobacter baylyi (strain ATCC 33305 / BD413 / ADP1).